A 190-amino-acid chain; its full sequence is FUN14 domain-containing protein 2 (190 aa).

The segment covering 1-13 (METSTQRTGSHLA) has biased composition (polar residues). The interval 1-31 (METSTQRTGSHLAQTAAARHSASSRGEAARV) is disordered. The Cytoplasmic segment spans residues 1–81 (METSTQRTGS…GQESGPSAEK (81 aa)). Phosphoserine is present on residues S10 and S54. Residues 82 to 102 (YSVATQLLIGGVTGWCTGFIF) form a helical membrane-spanning segment. Residues 103-108 (QKVGKL) are Mitochondrial intermembrane-facing. A helical transmembrane segment spans residues 109-129 (AATAVGGGFFLLQLANHTGYI). Residues 130–165 (KVDWQRVEKDMKKAKEQLKIRKSNQIPTEVKSKAEE) are Cytoplasmic-facing. Residue S152 is modified to Phosphoserine. Residues 166-186 (VVSFVKKNVLVTGGFFGGFLL) traverse the membrane as a helical segment. Residues 187–190 (GMAS) lie on the Mitochondrial intermembrane side of the membrane.

Belongs to the FUN14 family.

It is found in the mitochondrion outer membrane. The protein localises to the nucleus. Functionally, binds directly and specifically 1,2-Diacyl-sn-glycero-3-phospho-(1'-myo-inositol-3',4',5'-bisphosphate) (PIP3) leading to the recruitment of PIP3 to mitochondria and may play a role in the regulation of the platelet activation via AKT/GSK3B/cGMP signaling pathways. May act as transcription factor that regulates SREBP1 (isoform SREBP-1C) expression in order to modulate triglyceride (TG) homeostasis in hepatocytes. This Bos taurus (Bovine) protein is FUN14 domain-containing protein 2.